The sequence spans 203 residues: 8-oxoguanine DNA glycosylase/AP lyase (203 aa).

Active-site residues include Lys-128 and Asp-146.

It belongs to the type-2 OGG1 family.

The enzyme catalyses 2'-deoxyribonucleotide-(2'-deoxyribose 5'-phosphate)-2'-deoxyribonucleotide-DNA = a 3'-end 2'-deoxyribonucleotide-(2,3-dehydro-2,3-deoxyribose 5'-phosphate)-DNA + a 5'-end 5'-phospho-2'-deoxyribonucleoside-DNA + H(+). Functionally, catalyzes the excision of an oxidatively damaged form of guanine (7,8-dihydro-8-oxoguanine = 8-oxoG) from DNA. Also cleaves the DNA backbone at apurinic/apyrimidinic sites (AP sites). The protein is 8-oxoguanine DNA glycosylase/AP lyase of Sulfolobus acidocaldarius (strain ATCC 33909 / DSM 639 / JCM 8929 / NBRC 15157 / NCIMB 11770).